We begin with the raw amino-acid sequence, 522 residues long: Lysine--tRNA ligase (522 aa).

The short motif at P44–T52 is the 'HIGH' region element. A 'KMSKS' region motif is present at residues K290 to S294. K293 contacts ATP.

It belongs to the class-I aminoacyl-tRNA synthetase family.

The protein localises to the cytoplasm. It catalyses the reaction tRNA(Lys) + L-lysine + ATP = L-lysyl-tRNA(Lys) + AMP + diphosphate. The sequence is that of Lysine--tRNA ligase from Rickettsia massiliae (strain Mtu5).